Consider the following 425-residue polypeptide: Serine--tRNA ligase (425 aa).

Residue Thr-229–Glu-231 coordinates L-serine. Arg-260–Glu-262 provides a ligand contact to ATP. Position 283 (Glu-283) interacts with L-serine. Glu-347 to Ser-350 is an ATP binding site. Ser-384 provides a ligand contact to L-serine.

This sequence belongs to the class-II aminoacyl-tRNA synthetase family. Type-1 seryl-tRNA synthetase subfamily. In terms of assembly, homodimer. The tRNA molecule binds across the dimer.

The protein localises to the cytoplasm. It carries out the reaction tRNA(Ser) + L-serine + ATP = L-seryl-tRNA(Ser) + AMP + diphosphate + H(+). The catalysed reaction is tRNA(Sec) + L-serine + ATP = L-seryl-tRNA(Sec) + AMP + diphosphate + H(+). The protein operates within aminoacyl-tRNA biosynthesis; selenocysteinyl-tRNA(Sec) biosynthesis; L-seryl-tRNA(Sec) from L-serine and tRNA(Sec): step 1/1. In terms of biological role, catalyzes the attachment of serine to tRNA(Ser). Is also able to aminoacylate tRNA(Sec) with serine, to form the misacylated tRNA L-seryl-tRNA(Sec), which will be further converted into selenocysteinyl-tRNA(Sec). The sequence is that of Serine--tRNA ligase from Rhizorhabdus wittichii (strain DSM 6014 / CCUG 31198 / JCM 15750 / NBRC 105917 / EY 4224 / RW1) (Sphingomonas wittichii).